The primary structure comprises 365 residues: ADP-ribosylhydrolase ARH3 (365 aa).

Positions 42, 77, 78, and 79 each coordinate Mg(2+). Asp-78 provides a ligand contact to substrate. Substrate is bound by residues 147–153 (KGSYGNG), His-183, Leu-236, and Ile-272. Positions 315, 317, and 318 each coordinate Mg(2+).

It belongs to the ADP-ribosylglycohydrolase family. As to quaternary structure, monomer. The cofactor is Mg(2+).

It is found in the nucleus. It localises to the cytoplasm. The protein resides in the chromosome. Its subcellular location is the mitochondrion matrix. The catalysed reaction is [(1''-&gt;2')-ADP-alpha-D-ribose](n) + H2O = [(1''-&gt;2')-ADP-alpha-D-ribose](n-1) + ADP-D-ribose. It catalyses the reaction 1''-O-acetyl-ADP-alpha-D-ribose + H2O = ADP-D-ribose + acetate + H(+). The enzyme catalyses O-(ADP-D-ribosyl)-L-seryl-[protein] + H2O = ADP-D-ribose + L-seryl-[protein]. It carries out the reaction alpha-NAD(+) + H2O = ADP-D-ribose + nicotinamide + H(+). The protein undergoes a dramatic conformational switch from closed to open states upon substrate-binding, which enables specific substrate recognition for the 1''-O-linkage. The glutamate flap (Glu-42) blocks substrate entrance to Mg(2+) in the unliganded closed state. In presence of substrate, Glu-42 is ejected from the active site: this closed-to-open transition significantly widens the substrate-binding channel and precisely positions the scissile 1''-O-linkage for cleavage while securing tightly 2'- and 3'-hydroxyls of ADP-ribose. ADP-ribosylhydrolase that preferentially hydrolyzes the scissile alpha-O-linkage attached to the anomeric C1'' position of ADP-ribose and acts on different substrates, such as proteins ADP-ribosylated on serine and threonine, free poly(ADP-ribose) and O-acetyl-ADP-D-ribose. Specifically acts as a serine mono-ADP-ribosylhydrolase by mediating the removal of mono-ADP-ribose attached to serine residues on proteins, thereby playing a key role in DNA damage response. Serine ADP-ribosylation of proteins constitutes the primary form of ADP-ribosylation of proteins in response to DNA damage. Does not hydrolyze ADP-ribosyl-arginine, -cysteine, -diphthamide, or -asparagine bonds. Also able to degrade protein free poly(ADP-ribose), which is synthesized in response to DNA damage: free poly(ADP-ribose) acts as a potent cell death signal and its degradation by ADPRHL2 protects cells from poly(ADP-ribose)-dependent cell death, a process named parthanatos. Also hydrolyzes free poly(ADP-ribose) in mitochondria. Specifically digests O-acetyl-ADP-D-ribose, a product of deacetylation reactions catalyzed by sirtuins. Specifically degrades 1''-O-acetyl-ADP-D-ribose isomer, rather than 2''-O-acetyl-ADP-D-ribose or 3''-O-acetyl-ADP-D-ribose isomers. The chain is ADP-ribosylhydrolase ARH3 (ADPRS) from Bos taurus (Bovine).